The following is a 672-amino-acid chain: Spermatid perinuclear RNA-binding protein (672 aa).

A DZF domain is found at 5-363; that stretch reads RSFANDDRHV…ALKRPFEDGL (359 aa). 2 disordered regions span residues 52-73 and 349-371; these read TNKG…GENY and GAGS…DPNK. Positions 357–371 are enriched in basic and acidic residues; sequence RPFEDGLGDDKDPNK. The 67-residue stretch at 387–453 folds into the DRBM 1 domain; that stretch reads DLMNALMRLN…AVKVLQAMGY (67 aa). The segment covering 466 to 476 has biased composition (basic and acidic residues); that stretch reads SDEKSDNESKN. The tract at residues 466–499 is disordered; it reads SDEKSDNESKNETVSSNSSNNTGNSTTETSSTLE. Residues 477–497 show a composition bias toward low complexity; it reads ETVSSNSSNNTGNSTTETSST. Positions 510–576 constitute a DRBM 2 domain; the sequence is SGKNPVMELN…ALAALEKLFS (67 aa). Asymmetric dimethylarginine occurs at positions 612 and 617.

Interacts with EIF2AK2. Associates with microtubules; it is unsure whether such interaction is direct or indirect.

It localises to the cytoplasm. Involved in spermatogenesis and sperm function. Plays a role in regulation of cell growth. Binds to double-stranded DNA and RNA. Binds most efficiently to poly(I:C) RNA than to poly(dI:dC) DNA. Binds also to single-stranded poly(G) RNA. Binds non-specifically to the mRNA PRM1 3'-UTR and adenovirus VA RNA. This chain is Spermatid perinuclear RNA-binding protein (STRBP), found in Pongo abelii (Sumatran orangutan).